Here is a 115-residue protein sequence, read N- to C-terminus: UPF0122 protein lp_1634 (115 aa).

This sequence belongs to the UPF0122 family.

In terms of biological role, might take part in the signal recognition particle (SRP) pathway. This is inferred from the conservation of its genetic proximity to ftsY/ffh. May be a regulatory protein. This is UPF0122 protein lp_1634 from Lactiplantibacillus plantarum (strain ATCC BAA-793 / NCIMB 8826 / WCFS1) (Lactobacillus plantarum).